The primary structure comprises 555 residues: uncharacterized protein (555 aa).

2 consecutive ABC transporter domains span residues V4 to K244 and I255 to M547. ATP is bound by residues G36–S43 and G292–T299.

This sequence belongs to the ABC transporter superfamily.

This is an uncharacterized protein from Methanocaldococcus jannaschii (strain ATCC 43067 / DSM 2661 / JAL-1 / JCM 10045 / NBRC 100440) (Methanococcus jannaschii).